A 92-amino-acid polypeptide reads, in one-letter code: MPKLEMMLLVLLILPLSYFDSAGGQAVKVDGHGDGMDRYLQRDDREARITCQPRGRSKWGRCCLTQMCGNFCCPRYGCRCVYRSGRGHGCSC.

The first 24 residues, 1–24, serve as a signal peptide directing secretion; that stretch reads MPKLEMMLLVLLILPLSYFDSAGG. The propeptide occupies 25–45; sequence QAVKVDGHGDGMDRYLQRDDR. Disulfide bonds link C63-C72, C68-C80, C73-C90, and C78-C92.

It belongs to the conotoxin D superfamily. In terms of assembly, homodimer; disulfide-linked. In terms of processing, the homodimer contains 10 disulfide bonds. In terms of tissue distribution, expressed by the venom duct.

It is found in the secreted. In terms of biological role, alpha-conotoxins act on postsynaptic membranes, they bind to the nicotinic acetylcholine receptors (nAChR) and thus inhibit them. Through its two C-terminal domains, this homodimeric protein would bind to two nAChR allosteric sites, located outside the nAChR C-loop of the principal binding face and at the adjacent binding interface in a clockwise direction. This toxin blocks both neuronal and muscular subtypes: human alpha-7/CHRNA7, human alpha-3-beta-2 (CHRNA3-CHRNB2), human alpha-4-beta-2 (CHRNA4-CHRNB2), mouse adult muscular subtype alpha-1-beta-1-delta-epsilon (CHRNA1-CHRNB1-CHRND-CHRNE), and mouse fetal muscular subtype alpha-1-beta-1-gamma-delta (CHRNA1-CHRNB1-CHRNG-CHRND). Shows different dissociation rates towards the different subtypes, with a very slow rate towards alpha-7 subtype (almost irreversible), followed by the adult muscular subtype, the fetal muscular subtype, alpha-3-beta-2 and alpha-4-beta-2 (almost entirely reversible within a few minutes of washing). The polypeptide is Alpha-conotoxin FrXXA (Conus fergusoni (Ferguson's cone)).